The following is a 439-amino-acid chain: Xaa-Pro dipeptidase (439 aa).

Mn(2+) is bound by residues aspartate 244, aspartate 255, histidine 335, glutamate 380, and glutamate 419.

The protein belongs to the peptidase M24B family. Bacterial-type prolidase subfamily. Mn(2+) serves as cofactor.

The enzyme catalyses Xaa-L-Pro dipeptide + H2O = an L-alpha-amino acid + L-proline. Splits dipeptides with a prolyl residue in the C-terminal position. The sequence is that of Xaa-Pro dipeptidase from Shewanella sp. (strain MR-7).